Consider the following 309-residue polypeptide: Protein FdhE homolog (309 aa).

The protein belongs to the FdhE family.

It localises to the cytoplasm. In terms of biological role, necessary for formate dehydrogenase activity. This Enterobacter sp. (strain 638) protein is Protein FdhE homolog.